The following is a 143-amino-acid chain: Flagellar assembly factor FliW (143 aa).

This sequence belongs to the FliW family. Interacts with flagellin in a 1:1 complex. Two molecules interact with each CsrA dimer; cannot interact with both flagellin and CsrA simultaneously. Has a higher affinity for CsrA than for flagellin. Interacts directly with flagellin (hag), forms a 3-way complex of Hag, FliS and FliW in which Flis and FliW do not directly interact. Interaction with Hag may occur via the C-terminus of Hag.

It localises to the cytoplasm. Functionally, acts as an anti-CsrA protein, binds CsrA and prevents it from repressing translation of its target genes, one of which is flagellin. Binds to flagellin (hag), which is implicated in polymerization, and participates in the assembly of the flagellum. An antagonist to translational regulator CsrA, it binds CsrA at an allosteric site and non-competitively inhibits CsrA binding to hag RNA. Partner switching by flagellin between FliW and CsrA provides a flagellar assembly checkpoint to tightly control the timing of flagellin synthesis. Flagellin binds to assembly factor FliW, freeing translation regulator CsrA to repress translation of the flagellin mRNA. When the flagellar hook is assembled flagellin is secreted, depleting intracellular flagellin, which frees FliW to interact with CsrA and inhibits CsrA binding to mRNA. This derepresses flagellin translation and provides protein for flagellar assembly. Once the flagellar filament is completed cytoplasmic flagellin levels rise and CsrA translation repression of flagellin reinitiates. Binds to CsrA and displaces it from hag mRNA. Binds to hag mRNA itself, but only at much higher concentrations than those required to displace CsrA. This chain is Flagellar assembly factor FliW, found in Bacillus subtilis (strain 168).